The primary structure comprises 188 residues: Augmin complex subunit dgt4 (188 aa).

Residues 141–163 (QREFAQNQEALRSLRTAVDGLEN) are a coiled coil.

Component of the augmin complex composed of dgt2, dgt3, dgt4, dgt5, dgt6, msd1, msd5 and wac. The complex interacts directly or indirectly with microtubules and is required for centrosome-independent generation of spindle microtubules.

Its subcellular location is the cytoplasm. The protein resides in the cytoskeleton. The protein localises to the spindle. In terms of biological role, as part of the augmin complex, plays a role in centrosome-independent generation of spindle microtubules. The complex is required for mitotic spindle assembly through its involvement in localizing gamma-tubulin to spindle microtubules. The sequence is that of Augmin complex subunit dgt4 from Drosophila melanogaster (Fruit fly).